Here is a 628-residue protein sequence, read N- to C-terminus: tRNA uridine 5-carboxymethylaminomethyl modification enzyme MnmG (628 aa).

Residues 14-19, Val126, and Ser181 each bind FAD; that span reads GAGHAG. Position 273-287 (273-287) interacts with NAD(+); it reads GPRYCPSIEDKVVRF. Position 370 (Gln370) interacts with FAD.

The protein belongs to the MnmG family. Homodimer. Heterotetramer of two MnmE and two MnmG subunits. It depends on FAD as a cofactor.

It localises to the cytoplasm. Functionally, NAD-binding protein involved in the addition of a carboxymethylaminomethyl (cmnm) group at the wobble position (U34) of certain tRNAs, forming tRNA-cmnm(5)s(2)U34. This Pelobacter propionicus (strain DSM 2379 / NBRC 103807 / OttBd1) protein is tRNA uridine 5-carboxymethylaminomethyl modification enzyme MnmG.